A 372-amino-acid polypeptide reads, in one-letter code: Enoyl-[acyl-carrier-protein] reductase, mitochondrial (372 aa).

Residues 1-18 constitute a mitochondrion transit peptide; that stretch reads MSFFKTAVRRFSSTSITR. The active-site Proton donor is Y72. Residues N157, 183–186, 206–208, 279–282, 304–306, and K365 contribute to the NADP(+) site; these read NSMV, RNR, FGGM, and FWV.

The protein belongs to the zinc-containing alcohol dehydrogenase family. Quinone oxidoreductase subfamily. Homodimer.

Its subcellular location is the mitochondrion matrix. It catalyses the reaction a 2,3-saturated acyl-[ACP] + NADP(+) = a (2E)-enoyl-[ACP] + NADPH + H(+). In terms of biological role, catalyzes the NADPH-dependent reduction of trans-2-enoyl thioesters in mitochondrial fatty acid synthesis (fatty acid synthesis type II). Fatty acid chain elongation in mitochondria uses acyl carrier protein (ACP) as an acyl group carrier, but the enzyme accepts both ACP and CoA thioesters as substrates in vitro. Required for respiration and the maintenance of the mitochondrial compartment. This Schizosaccharomyces pombe (strain 972 / ATCC 24843) (Fission yeast) protein is Enoyl-[acyl-carrier-protein] reductase, mitochondrial (etr1).